We begin with the raw amino-acid sequence, 201 residues long: NADH-quinone oxidoreductase subunit C 1 (201 aa).

This sequence belongs to the complex I 30 kDa subunit family. As to quaternary structure, NDH-1 is composed of 14 different subunits. Subunits NuoB, C, D, E, F, and G constitute the peripheral sector of the complex.

It is found in the cell inner membrane. The catalysed reaction is a quinone + NADH + 5 H(+)(in) = a quinol + NAD(+) + 4 H(+)(out). In terms of biological role, NDH-1 shuttles electrons from NADH, via FMN and iron-sulfur (Fe-S) centers, to quinones in the respiratory chain. The immediate electron acceptor for the enzyme in this species is believed to be ubiquinone. Couples the redox reaction to proton translocation (for every two electrons transferred, four hydrogen ions are translocated across the cytoplasmic membrane), and thus conserves the redox energy in a proton gradient. The polypeptide is NADH-quinone oxidoreductase subunit C 1 (Rhizobium meliloti (strain 1021) (Ensifer meliloti)).